Here is a 310-residue protein sequence, read N- to C-terminus: Glutaminase (310 aa).

The substrate site is built by serine 67, asparagine 118, glutamate 161, asparagine 168, tyrosine 192, tyrosine 244, and valine 262.

Belongs to the glutaminase family. Homotetramer.

The catalysed reaction is L-glutamine + H2O = L-glutamate + NH4(+). The chain is Glutaminase from Legionella pneumophila (strain Lens).